We begin with the raw amino-acid sequence, 125 residues long: Small ribosomal subunit protein uS12m (125 aa).

Residues 1-50 (MPSLNQLIRHGREEKRRTDRTRALDQCPQKQGVCPRVSTRTPKKPNSAPR) form a disordered region. The segment covering 10–23 (HGREEKRRTDRTRA) has biased composition (basic and acidic residues).

Belongs to the universal ribosomal protein uS12 family.

Its subcellular location is the mitochondrion. Protein S12 is involved in the translation initiation step. This chain is Small ribosomal subunit protein uS12m (RPS12), found in Petunia hybrida (Petunia).